The primary structure comprises 271 residues: uncharacterized protein (271 aa).

3 consecutive transmembrane segments (helical) span residues 30–50 (IWFPIVVGIIASAVGMFGMLL), 189–209 (ALAAVIEELLVNIATAIYFLI), and 218–238 (FLVTVGSSLTYLSNIPMIFAC).

The protein resides in the cell membrane. This is an uncharacterized protein from Aquifex aeolicus (strain VF5).